Here is a 212-residue protein sequence, read N- to C-terminus: Ras-related protein Rab-2A (212 aa).

Ala2 carries the N-acetylalanine modification. A required for interaction with PRKCI region spans residues Ala2–Lys19. Positions 16, 17, 18, 19, 20, 21, and 38 each coordinate GTP. Residue Ser20 coordinates Mg(2+). The short motif at Leu37 to Glu42 is the Switch 1 element. Mg(2+)-binding residues include Thr38 and Asp61. Positions Ala63 to Thr72 match the Switch 2 motif. The GTP site is built by Gly64, Asn119, Lys120, Asp122, Ala150, and Lys151. The segment at Gln190–Cys212 is disordered. Positions Gly200–Cys212 are enriched in gly residues. S-geranylgeranyl cysteine attachment occurs at residues Cys211 and Cys212.

This sequence belongs to the small GTPase superfamily. Rab family. As to quaternary structure, interacts with PRKCI. Interacts with TRIP11. Interacts (in GTP-bound form) with GARIN1B. Interacts (GTP-bound) with HOPS complex component VPS39; interaction contributes to obtaining a functional HOPS complex that promotes autophagosome-lysosome membrane fusion driven by STX17-SNAP29-VAMP8. May interact with VPS41. The cofactor is Mg(2+). Post-translationally, prenylated. Prenylation is required for association with cellular membranes.

The protein localises to the endoplasmic reticulum-Golgi intermediate compartment membrane. It is found in the melanosome. The protein resides in the endoplasmic reticulum membrane. Its subcellular location is the golgi apparatus membrane. It localises to the cytoplasmic vesicle. The protein localises to the secretory vesicle. It is found in the acrosome. The protein resides in the autophagosome membrane. The enzyme catalyses GTP + H2O = GDP + phosphate + H(+). Regulated by guanine nucleotide exchange factors (GEFs) which promote the exchange of bound GDP for free GTP, GTPase activating proteins (GAPs) which increase the GTP hydrolysis activity, and GDP dissociation inhibitors (GDIs) which inhibit the dissociation of the nucleotide from the GTPase. In terms of biological role, the small GTPases Rab are key regulators of intracellular membrane trafficking, from the formation of transport vesicles to their fusion with membranes. Rabs cycle between active GTP-bound and inactive GDP-bound states. In their active state, drive transport of vesicular carriers from donor organelles to acceptor organelles to regulate the membrane traffic that maintains organelle identity and morphology. RAB2A regulates autophagy by promoting autophagosome-lysosome fusion via recruitment of the HOPS endosomal tethering complex; this process involves autophagosomal RAB2A and lysosomal RAB39A recruitment of HOPS subcomplexes VPS39-VPS11 and VPS41-VPS16-VPS18-VPS33A, respectively, which assemble into a functional complex to mediate membrane tethering and SNAREs-driven membrane fusion. Required for protein transport from the endoplasmic reticulum to the Golgi complex. Regulates the compacted morphology of the Golgi. Together with RAB2B, redundantly required for efficient autophagic flux. This Rattus norvegicus (Rat) protein is Ras-related protein Rab-2A (Rab2a).